Here is a 278-residue protein sequence, read N- to C-terminus: Elongation factor Ts (278 aa).

Positions 80-83 (TDFV) are involved in Mg(2+) ion dislocation from EF-Tu.

The protein belongs to the EF-Ts family.

It localises to the cytoplasm. Functionally, associates with the EF-Tu.GDP complex and induces the exchange of GDP to GTP. It remains bound to the aminoacyl-tRNA.EF-Tu.GTP complex up to the GTP hydrolysis stage on the ribosome. This chain is Elongation factor Ts, found in Paenarthrobacter aurescens (strain TC1).